A 409-amino-acid polypeptide reads, in one-letter code: Arginine deiminase (409 aa).

The active-site Amidino-cysteine intermediate is Cys-399.

Belongs to the arginine deiminase family.

The protein resides in the cytoplasm. It catalyses the reaction L-arginine + H2O = L-citrulline + NH4(+). Its pathway is amino-acid degradation; L-arginine degradation via ADI pathway; carbamoyl phosphate from L-arginine: step 1/2. The chain is Arginine deiminase from Borrelia recurrentis (strain A1).